The chain runs to 375 residues: 23S rRNA (uracil(747)-C(5))-methyltransferase RlmC (375 aa).

4 residues coordinate [4Fe-4S] cluster: cysteine 3, cysteine 11, cysteine 14, and cysteine 87. 4 residues coordinate S-adenosyl-L-methionine: glutamine 212, phenylalanine 241, glutamate 262, and asparagine 307. Cysteine 334 serves as the catalytic Nucleophile.

This sequence belongs to the class I-like SAM-binding methyltransferase superfamily. RNA M5U methyltransferase family. RlmC subfamily.

The enzyme catalyses uridine(747) in 23S rRNA + S-adenosyl-L-methionine = 5-methyluridine(747) in 23S rRNA + S-adenosyl-L-homocysteine + H(+). In terms of biological role, catalyzes the formation of 5-methyl-uridine at position 747 (m5U747) in 23S rRNA. The protein is 23S rRNA (uracil(747)-C(5))-methyltransferase RlmC of Escherichia coli O157:H7.